A 613-amino-acid polypeptide reads, in one-letter code: Myosin light chain kinase 2, skeletal/cardiac muscle (613 aa).

Polar residues predominate over residues 1–20 (MTTENGAVELGSQSLSTEQT). The interval 1-168 (MTTENGAVEL…RGSPAFLHSP (168 aa)) is disordered. Residues 32-55 (SEKEPSAPATEKDLSPPNAKKDPG) show a composition bias toward basic and acidic residues. Over residues 56-66 (APDPKNNPDPP) the composition is skewed to pro residues. A compositionally biased stretch (basic and acidic residues) spans 67 to 83 (SLKKDPAKAPGPEKKGD). Over residues 95 to 105 (SGEGDGGGGPA) the composition is skewed to gly residues. Residues 106-122 (EGSEGPPAALPLPTATA) are compositionally biased toward low complexity. Residues 145–158 (KAGKKAAECREAGR) are compositionally biased toward basic and acidic residues. Phosphoserine is present on residues S161, S167, and S169. The tract at residues 219 to 240 (EKKKEEAEKASGQAGQAKVQGD) is disordered. In terms of domain architecture, Protein kinase spans 302-557 (MNSKEALGGG…AEQCLAHPWL (256 aa)). ATP is bound by residues 308–316 (LGGGKFGAV) and K331. The Proton acceptor role is filled by D423. T462 bears the Phosphothreonine mark. Residues 591 to 603 (IAVSAANRFKKIS) form a calmodulin-binding region.

The protein belongs to the protein kinase superfamily. CAMK Ser/Thr protein kinase family. In terms of assembly, may interact with centrin.

The protein localises to the cytoplasm. It carries out the reaction L-seryl-[myosin light chain] + ATP = O-phospho-L-seryl-[myosin light chain] + ADP + H(+). The catalysed reaction is L-threonyl-[myosin light chain] + ATP = O-phospho-L-threonyl-[myosin light chain] + ADP + H(+). Implicated in the level of global muscle contraction and cardiac function. Phosphorylates a specific serine in the N-terminus of a myosin light chain. This chain is Myosin light chain kinase 2, skeletal/cardiac muscle (Mylk2), found in Mus musculus (Mouse).